The sequence spans 462 residues: Asparagine--tRNA ligase (462 aa).

Belongs to the class-II aminoacyl-tRNA synthetase family. Homodimer.

It localises to the cytoplasm. The enzyme catalyses tRNA(Asn) + L-asparagine + ATP = L-asparaginyl-tRNA(Asn) + AMP + diphosphate + H(+). The polypeptide is Asparagine--tRNA ligase (Thermosynechococcus vestitus (strain NIES-2133 / IAM M-273 / BP-1)).